Here is a 178-residue protein sequence, read N- to C-terminus: ATP-dependent protease subunit HslV (178 aa).

Residue T7 is part of the active site. Residues G162, C165, and T168 each coordinate Na(+).

It belongs to the peptidase T1B family. HslV subfamily. As to quaternary structure, a double ring-shaped homohexamer of HslV is capped on each side by a ring-shaped HslU homohexamer. The assembly of the HslU/HslV complex is dependent on binding of ATP.

Its subcellular location is the cytoplasm. The catalysed reaction is ATP-dependent cleavage of peptide bonds with broad specificity.. With respect to regulation, allosterically activated by HslU binding. Protease subunit of a proteasome-like degradation complex believed to be a general protein degrading machinery. The polypeptide is ATP-dependent protease subunit HslV (Cupriavidus metallidurans (strain ATCC 43123 / DSM 2839 / NBRC 102507 / CH34) (Ralstonia metallidurans)).